The sequence spans 808 residues: MAGTVVLDDVELREAQRDYLDFLDDEEDQGIYQSKVRELISDNQYRLIVNVNDLRRKNEKRANRLLNNAFEELVAFQRALKDFVASIDATYAKQYEEFYVGLEGSFGSKHVSPRTLTSCFLSCVVCVEGIVTKCSLVRPKVVRSVHYCPATKKTIERRYSDLTTLVAFPSSSVYPTKDEENNPLETEYGLSVYKDHQTITIQEMPEKAPAGQLPRSVDVILDDDLVDKAKPGDRVQVVGTYRCLPGKKGGYTSGTFRTVLIACNVKQMSKDAQPSFSAEDIAKIKKFSKTRSKDIFDQLARSLAPSIHGHDYVKKAILCLLLGGVERDLENGSHIRGDINILLIGDPSVAKSQLLRYVLCTAPRAIPTTGRGSSGVGLTAAVTTDQETGERRLEAGAMVLADRGVVCIDEFDKMSDMDRTAIHEVMEQGRVTIAKAGIHARLNARCSVLAAANPVYGRYDQYKTPMENIGLQDSLLSRFDLLFIMLDQMDPEQDREISDHVLRMHRYRAPGEQDGDAMPLGSAVDILATDDPNFSQEDQQDTQIYEKHDNLLHGTKKKKEKMVSAAFMKKYIHVAKIIKPVLTQESATYIAEEYSRLRSQDSMSSDTARTSPVTARTLETLIRLATAHAKARMSKTVDLQDAEEAVELVQYAYFKKVLEKEKKRKKRSEDESETEDEEEKSQEDQEQKRKRRKTRQSDAKDGDSYDPYDFSDTEEEMPQVHTPKTADSQETKESQKVELSESRLKAFKVALLDVFREAHAQSIGMNRLTESINRDSEEPFSSVEIQAALSKMQDDNQVMVSEGIIFLI.

Alanine 2 carries the N-acetylalanine modification. Phosphoserine is present on residues serine 160 and serine 275. Position 293 is an N6-acetyllysine (lysine 293). The MCM domain occupies 295–502; that stretch reads IFDQLARSLA…QDREISDHVL (208 aa). The ADP site is built by glutamine 353, leucine 393, glutamate 394, alanine 395, and alanine 397. The Arginine finger signature appears at 477–480; the sequence is SRFD. Alanine 523 contacts ATP. The residue at position 535 (serine 535) is a Phosphoserine; by ATM. Lysine 547 carries the post-translational modification N6-acetyllysine. Serine 611 is subject to Phosphoserine. The disordered stretch occupies residues 662–738; it reads KKRKKRSEDE…QETKESQKVE (77 aa). Arginine 664 is an ATP binding site. Phosphoserine is present on residues serine 668 and serine 672. Composition is skewed to acidic residues over residues 670 to 681 and 704 to 717; these read DESETEDEEEKS and SYDP…EEEM. Threonine 674 bears the Phosphothreonine mark. Serine 681 is modified (phosphoserine). Residue tyrosine 708 is modified to Phosphotyrosine. Serine 711 carries the phosphoserine modification. Phosphothreonine occurs at positions 713, 722, and 725. The span at 727-738 shows a compositional bias: basic and acidic residues; sequence DSQETKESQKVE. Serine 728 and serine 734 each carry phosphoserine.

It belongs to the MCM family. Component of the MCM2-7 complex. The complex forms a toroidal hexameric ring with the proposed subunit order MCM2-MCM6-MCM4-MCM7-MCM3-MCM5. Component of the CMG helicase complex, a hexameric ring of related MCM2-7 subunits stabilized by CDC45 and the tetrameric GINS complex. Associated with the replication-specific DNA polymerase alpha. Interacts with MCMBP. Interacts with ANKRD17. Interacts with MCM3AP isoform MCM3AP; this interaction leads to MCM3 acetylation. In terms of processing, acetylated by MCM3AP. Post-translationally, O-glycosylated (O-GlcNAcylated), in a cell cycle-dependent manner.

The protein resides in the nucleus. It is found in the chromosome. It catalyses the reaction ATP + H2O = ADP + phosphate + H(+). Functionally, acts as a component of the MCM2-7 complex (MCM complex) which is the replicative helicase essential for 'once per cell cycle' DNA replication initiation and elongation in eukaryotic cells. Core component of CDC45-MCM-GINS (CMG) helicase, the molecular machine that unwinds template DNA during replication, and around which the replisome is built. The active ATPase sites in the MCM2-7 ring are formed through the interaction surfaces of two neighboring subunits such that a critical structure of a conserved arginine finger motif is provided in trans relative to the ATP-binding site of the Walker A box of the adjacent subunit. The six ATPase active sites, however, are likely to contribute differentially to the complex helicase activity. Required for the entry in S phase and for cell division. The protein is DNA replication licensing factor MCM3 (MCM3) of Pongo abelii (Sumatran orangutan).